The primary structure comprises 178 residues: Large ribosomal subunit protein eL20w (178 aa).

It belongs to the eukaryotic ribosomal protein eL20 family.

The sequence is that of Large ribosomal subunit protein eL20w (RPL18AD) from Arabidopsis thaliana (Mouse-ear cress).